We begin with the raw amino-acid sequence, 739 residues long: Catalase-peroxidase (739 aa).

The first 23 residues, M1 to A23, serve as a signal peptide directing secretion. Residues W100–Y221 constitute a cross-link (tryptophyl-tyrosyl-methioninium (Trp-Tyr) (with M-247)). The active-site Proton acceptor is the H101. A cross-link (tryptophyl-tyrosyl-methioninium (Tyr-Met) (with W-100)) is located at residues Y221–M247. H262 lines the heme b pocket.

This sequence belongs to the peroxidase family. Peroxidase/catalase subfamily. In terms of assembly, homodimer or homotetramer. Requires heme b as cofactor. Post-translationally, formation of the three residue Trp-Tyr-Met cross-link is important for the catalase, but not the peroxidase activity of the enzyme.

The catalysed reaction is H2O2 + AH2 = A + 2 H2O. It catalyses the reaction 2 H2O2 = O2 + 2 H2O. In terms of biological role, bifunctional enzyme with both catalase and broad-spectrum peroxidase activity. This Francisella philomiragia subsp. philomiragia (strain ATCC 25017 / CCUG 19701 / FSC 153 / O#319-036) protein is Catalase-peroxidase.